We begin with the raw amino-acid sequence, 36 residues long: Photosystem I reaction center subunit VIII (36 aa).

The helical transmembrane segment at 9 to 29 (ILVPLVGLIFPAIAMTSLFIY) threads the bilayer.

The protein belongs to the PsaI family.

It localises to the plastid. It is found in the chloroplast thylakoid membrane. Its function is as follows. May help in the organization of the PsaL subunit. This chain is Photosystem I reaction center subunit VIII, found in Tupiella akineta (Green alga).